A 296-amino-acid polypeptide reads, in one-letter code: Release factor glutamine methyltransferase (296 aa).

S-adenosyl-L-methionine-binding positions include 133–137 (GTGSG), Asp-156, and Asn-201. 201–204 (NPPY) lines the substrate pocket.

This sequence belongs to the protein N5-glutamine methyltransferase family. PrmC subfamily.

It catalyses the reaction L-glutaminyl-[peptide chain release factor] + S-adenosyl-L-methionine = N(5)-methyl-L-glutaminyl-[peptide chain release factor] + S-adenosyl-L-homocysteine + H(+). Functionally, methylates the class 1 translation termination release factors RF1/PrfA and RF2/PrfB on the glutamine residue of the universally conserved GGQ motif. The polypeptide is Release factor glutamine methyltransferase (Rhodopirellula baltica (strain DSM 10527 / NCIMB 13988 / SH1)).